Reading from the N-terminus, the 181-residue chain is NADH-quinone oxidoreductase subunit B (181 aa).

[4Fe-4S] cluster contacts are provided by Cys45, Cys46, Cys111, and Cys140.

It belongs to the complex I 20 kDa subunit family. In terms of assembly, NDH-1 is composed of 15 different subunits. Subunits NuoB, C, D, E, F, and G constitute the peripheral sector of the complex. The cofactor is [4Fe-4S] cluster.

Its subcellular location is the cell membrane. It catalyses the reaction a quinone + NADH + 5 H(+)(in) = a quinol + NAD(+) + 4 H(+)(out). In terms of biological role, NDH-1 shuttles electrons from NADH, via FMN and iron-sulfur (Fe-S) centers, to quinones in the respiratory chain. The immediate electron acceptor for the enzyme in this species is believed to be a menaquinone. Couples the redox reaction to proton translocation (for every two electrons transferred, four hydrogen ions are translocated across the cytoplasmic membrane), and thus conserves the redox energy in a proton gradient. This chain is NADH-quinone oxidoreductase subunit B, found in Deinococcus radiodurans (strain ATCC 13939 / DSM 20539 / JCM 16871 / CCUG 27074 / LMG 4051 / NBRC 15346 / NCIMB 9279 / VKM B-1422 / R1).